Consider the following 248-residue polypeptide: Pyridoxine 5'-phosphate synthase (248 aa).

Position 12 (asparagine 12) interacts with 3-amino-2-oxopropyl phosphate. 14–15 (DH) serves as a coordination point for 1-deoxy-D-xylulose 5-phosphate. Arginine 23 lines the 3-amino-2-oxopropyl phosphate pocket. Histidine 48 (proton acceptor) is an active-site residue. 2 residues coordinate 1-deoxy-D-xylulose 5-phosphate: arginine 50 and histidine 55. Glutamate 75 functions as the Proton acceptor in the catalytic mechanism. Threonine 105 contributes to the 1-deoxy-D-xylulose 5-phosphate binding site. The active-site Proton donor is the histidine 196. 3-amino-2-oxopropyl phosphate-binding positions include glycine 197 and 218–219 (GH).

Belongs to the PNP synthase family. As to quaternary structure, homooctamer; tetramer of dimers.

Its subcellular location is the cytoplasm. The catalysed reaction is 3-amino-2-oxopropyl phosphate + 1-deoxy-D-xylulose 5-phosphate = pyridoxine 5'-phosphate + phosphate + 2 H2O + H(+). The protein operates within cofactor biosynthesis; pyridoxine 5'-phosphate biosynthesis; pyridoxine 5'-phosphate from D-erythrose 4-phosphate: step 5/5. In terms of biological role, catalyzes the complicated ring closure reaction between the two acyclic compounds 1-deoxy-D-xylulose-5-phosphate (DXP) and 3-amino-2-oxopropyl phosphate (1-amino-acetone-3-phosphate or AAP) to form pyridoxine 5'-phosphate (PNP) and inorganic phosphate. The polypeptide is Pyridoxine 5'-phosphate synthase (Azotobacter vinelandii (strain DJ / ATCC BAA-1303)).